A 74-amino-acid polypeptide reads, in one-letter code: Apolipoprotein C-I, acidic form (74 aa).

An N-terminal signal peptide occupies residues 1–26; the sequence is MRLFLSLPVLVVVLSMVLEGPTPAQG.

Belongs to the apolipoprotein C1 family.

Its subcellular location is the secreted. This chain is Apolipoprotein C-I, acidic form (APOC1A), found in Colobus guereza (Mantled guereza).